The primary structure comprises 102 residues: Putative peripheral benzodiazepine receptor-related protein (102 aa).

Ubiquitous.

This chain is Putative peripheral benzodiazepine receptor-related protein (TSPO), found in Homo sapiens (Human).